Consider the following 152-residue polypeptide: Transcriptional regulator MraZ (152 aa).

SpoVT-AbrB domains lie at 5 to 52 (VNQL…PLPE) and 81 to 124 (AQEL…DESL).

This sequence belongs to the MraZ family. Forms oligomers.

The protein resides in the cytoplasm. It localises to the nucleoid. The polypeptide is Transcriptional regulator MraZ (Halorhodospira halophila (strain DSM 244 / SL1) (Ectothiorhodospira halophila (strain DSM 244 / SL1))).